The following is a 95-amino-acid chain: Aspartyl/glutamyl-tRNA(Asn/Gln) amidotransferase subunit C (95 aa).

The span at 55–67 (ALERRNVTREDQV) shows a compositional bias: basic and acidic residues. Positions 55-83 (ALERRNVTREDQVHNSLTNDKALENAPET) are disordered.

Belongs to the GatC family. In terms of assembly, heterotrimer of A, B and C subunits.

It carries out the reaction L-glutamyl-tRNA(Gln) + L-glutamine + ATP + H2O = L-glutaminyl-tRNA(Gln) + L-glutamate + ADP + phosphate + H(+). The catalysed reaction is L-aspartyl-tRNA(Asn) + L-glutamine + ATP + H2O = L-asparaginyl-tRNA(Asn) + L-glutamate + ADP + phosphate + 2 H(+). Its function is as follows. Allows the formation of correctly charged Asn-tRNA(Asn) or Gln-tRNA(Gln) through the transamidation of misacylated Asp-tRNA(Asn) or Glu-tRNA(Gln) in organisms which lack either or both of asparaginyl-tRNA or glutaminyl-tRNA synthetases. The reaction takes place in the presence of glutamine and ATP through an activated phospho-Asp-tRNA(Asn) or phospho-Glu-tRNA(Gln). This is Aspartyl/glutamyl-tRNA(Asn/Gln) amidotransferase subunit C from Natranaerobius thermophilus (strain ATCC BAA-1301 / DSM 18059 / JW/NM-WN-LF).